The chain runs to 486 residues: Ribulose bisphosphate carboxylase large chain 3 (486 aa).

Positions 125 and 175 each coordinate substrate. The active-site Proton acceptor is the lysine 177. Lysine 179 serves as a coordination point for substrate. Mg(2+) is bound by residues lysine 203, aspartate 205, and glutamate 206. Lysine 203 is subject to N6-carboxylysine. Histidine 295 functions as the Proton acceptor in the catalytic mechanism. Residues arginine 296, histidine 328, and serine 380 each contribute to the substrate site.

This sequence belongs to the RuBisCO large chain family. Type I subfamily. In terms of assembly, heterohexadecamer of 8 large chains and 8 small chains. Requires Mg(2+) as cofactor.

The enzyme catalyses 2 (2R)-3-phosphoglycerate + 2 H(+) = D-ribulose 1,5-bisphosphate + CO2 + H2O. It catalyses the reaction D-ribulose 1,5-bisphosphate + O2 = 2-phosphoglycolate + (2R)-3-phosphoglycerate + 2 H(+). Its function is as follows. RuBisCO catalyzes two reactions: the carboxylation of D-ribulose 1,5-bisphosphate, the primary event in carbon dioxide fixation, as well as the oxidative fragmentation of the pentose substrate. Both reactions occur simultaneously and in competition at the same active site. In Bradyrhizobium sp. (strain BTAi1 / ATCC BAA-1182), this protein is Ribulose bisphosphate carboxylase large chain 3.